We begin with the raw amino-acid sequence, 341 residues long: Aspartate carbamoyltransferase catalytic subunit (341 aa).

Residues Arg-89 and Thr-90 each coordinate carbamoyl phosphate. Lys-117 contributes to the L-aspartate binding site. Carbamoyl phosphate is bound by residues Arg-139, His-169, and Gln-172. Residues Arg-202 and Arg-257 each contribute to the L-aspartate site. The carbamoyl phosphate site is built by Gly-298 and Pro-299.

This sequence belongs to the aspartate/ornithine carbamoyltransferase superfamily. ATCase family. Heterododecamer (2C3:3R2) of six catalytic PyrB chains organized as two trimers (C3), and six regulatory PyrI chains organized as three dimers (R2).

It carries out the reaction carbamoyl phosphate + L-aspartate = N-carbamoyl-L-aspartate + phosphate + H(+). It participates in pyrimidine metabolism; UMP biosynthesis via de novo pathway; (S)-dihydroorotate from bicarbonate: step 2/3. Catalyzes the condensation of carbamoyl phosphate and aspartate to form carbamoyl aspartate and inorganic phosphate, the committed step in the de novo pyrimidine nucleotide biosynthesis pathway. The polypeptide is Aspartate carbamoyltransferase catalytic subunit (Paraburkholderia phytofirmans (strain DSM 17436 / LMG 22146 / PsJN) (Burkholderia phytofirmans)).